A 508-amino-acid chain; its full sequence is ATP synthase subunit alpha (508 aa).

170 to 177 (GDRQTGKT) provides a ligand contact to ATP.

Belongs to the ATPase alpha/beta chains family. As to quaternary structure, F-type ATPases have 2 components, CF(1) - the catalytic core - and CF(0) - the membrane proton channel. CF(1) has five subunits: alpha(3), beta(3), gamma(1), delta(1), epsilon(1). CF(0) has three main subunits: a(1), b(2) and c(9-12). The alpha and beta chains form an alternating ring which encloses part of the gamma chain. CF(1) is attached to CF(0) by a central stalk formed by the gamma and epsilon chains, while a peripheral stalk is formed by the delta and b chains.

The protein resides in the cell inner membrane. The catalysed reaction is ATP + H2O + 4 H(+)(in) = ADP + phosphate + 5 H(+)(out). Functionally, produces ATP from ADP in the presence of a proton gradient across the membrane. The alpha chain is a regulatory subunit. This chain is ATP synthase subunit alpha, found in Dictyoglomus turgidum (strain DSM 6724 / Z-1310).